We begin with the raw amino-acid sequence, 145 residues long: Large ribosomal subunit protein uL15 (145 aa).

The disordered stretch occupies residues 1 to 50 (MRLNTLSPAAGSKPEKQRRGRGIGSGLGKTGGRGVKGQTSRSGGGKVRAG). Gly residues predominate over residues 22 to 35 (GIGSGLGKTGGRGV).

The protein belongs to the universal ribosomal protein uL15 family. As to quaternary structure, part of the 50S ribosomal subunit.

Binds to the 23S rRNA. In Aeromonas salmonicida (strain A449), this protein is Large ribosomal subunit protein uL15.